The sequence spans 447 residues: MSKVVHFDASKLTPFVHENELKEMQAMVTAADQELREGTGAGSDFRGWIDLPINYDKDEFDRIKKAAKKIQNDSEVLVGIGIGGSYLGAQASIEFLNSSFYGREKEKYPTVVFCGNSLSGSYLYDLLEWLGDKDFSINIISKSGTTTEPSIAFRVLKDKLIKKYGKEEAAKRIYATTDRAKGALKTEADAEGYEEFVVPDDIGGRFSVLSAVGLLPIAVAGGDIDAMMKGAADARAAYTDPDVLKDSPYQYAAMRNILYRKGYTTELLENYEPSLRMFGEWWKQLMGESEGKDQKGIYPSSANFTTDLHSLGQYIQEGRRNLMETVIRVEHPTHDVTIPDDKENLDQLNFLSGKTMNYVNDRAYEGVVLAHTDGGVPVMTVDIENQTAHTLGYLIYWFELAVGISGYLNGINPFNQPGVESYKRNMFGLLNKPGYEDLHDDLTKRLK.

Glutamate 288 serves as the catalytic Proton donor. Residues histidine 309 and lysine 423 contribute to the active site.

It belongs to the GPI family.

It is found in the cytoplasm. The enzyme catalyses alpha-D-glucose 6-phosphate = beta-D-fructose 6-phosphate. It participates in carbohydrate biosynthesis; gluconeogenesis. It functions in the pathway carbohydrate degradation; glycolysis; D-glyceraldehyde 3-phosphate and glycerone phosphate from D-glucose: step 2/4. In terms of biological role, catalyzes the reversible isomerization of glucose-6-phosphate to fructose-6-phosphate. The protein is Glucose-6-phosphate isomerase of Lactobacillus johnsonii (strain CNCM I-12250 / La1 / NCC 533).